Here is a 658-residue protein sequence, read N- to C-terminus: UvrABC system protein B (658 aa).

One can recognise a Helicase ATP-binding domain in the interval 26-413; it reads EGINSGKKKQ…SPEVIEQIIR (388 aa). 39–46 serves as a coordination point for ATP; that stretch reads GATGTGKT. A Beta-hairpin motif is present at residues 92-115; the sequence is YYDYYQPEAYVPQTDTFIEKDAQI. One can recognise a Helicase C-terminal domain in the interval 430 to 596; sequence QIDDLLGEIQ…TIQKGVRDVI (167 aa). Residues 622–657 enclose the UVR domain; that stretch reads EKTIAKMEAEMKEAAKALDFERAAELRDLLLELKAE.

Belongs to the UvrB family. In terms of assembly, forms a heterotetramer with UvrA during the search for lesions. Interacts with UvrC in an incision complex.

The protein resides in the cytoplasm. In terms of biological role, the UvrABC repair system catalyzes the recognition and processing of DNA lesions. A damage recognition complex composed of 2 UvrA and 2 UvrB subunits scans DNA for abnormalities. Upon binding of the UvrA(2)B(2) complex to a putative damaged site, the DNA wraps around one UvrB monomer. DNA wrap is dependent on ATP binding by UvrB and probably causes local melting of the DNA helix, facilitating insertion of UvrB beta-hairpin between the DNA strands. Then UvrB probes one DNA strand for the presence of a lesion. If a lesion is found the UvrA subunits dissociate and the UvrB-DNA preincision complex is formed. This complex is subsequently bound by UvrC and the second UvrB is released. If no lesion is found, the DNA wraps around the other UvrB subunit that will check the other stand for damage. In Bacillus anthracis, this protein is UvrABC system protein B.